Here is a 530-residue protein sequence, read N- to C-terminus: Na(+)/H(+) antiporter NhaB (530 aa).

Transmembrane regions (helical) follow at residues 23-43, 45-65, 90-110, 113-133, 140-160, 205-225, 238-258, 308-328, 351-371, 451-471, and 479-499; these read VAII…NPFL, GWLL…CYPL, LVAN…IYFM, LLLF…LLSI, AFLS…SVAV, LLMH…VGEP, FGEF…AGML, IAVW…LIGL, EEAL…AVII, ATPN…APLI, and VIMA…GIMF.

It belongs to the NhaB Na(+)/H(+) (TC 2.A.34) antiporter family.

The protein resides in the cell inner membrane. The catalysed reaction is 2 Na(+)(in) + 3 H(+)(out) = 2 Na(+)(out) + 3 H(+)(in). Its function is as follows. Na(+)/H(+) antiporter that extrudes sodium in exchange for external protons. The protein is Na(+)/H(+) antiporter NhaB of Vibrio cholerae serotype O1 (strain ATCC 39541 / Classical Ogawa 395 / O395).